Consider the following 510-residue polypeptide: NAD(P)H-quinone oxidoreductase subunit 2 A, chloroplastic (510 aa).

Transmembrane regions (helical) follow at residues 31-51 (FIFP…IDLT), 59-79 (WFYF…LFRW), 99-119 (IFQF…VEYI), 124-144 (MAIT…MFLC), 149-169 (LITI…LSGY), 183-203 (YLLM…WLYG), 229-249 (ISIA…PAPF), 295-315 (WHLL…LLAI), 323-343 (MLAY…IVGD), 354-374 (YMLF…LFGL), 395-415 (ALSL…AGFF), and 418-438 (LYLF…IGLL).

Belongs to the complex I subunit 2 family. NDH is composed of at least 16 different subunits, 5 of which are encoded in the nucleus.

The protein localises to the plastid. It localises to the chloroplast thylakoid membrane. The enzyme catalyses a plastoquinone + NADH + (n+1) H(+)(in) = a plastoquinol + NAD(+) + n H(+)(out). The catalysed reaction is a plastoquinone + NADPH + (n+1) H(+)(in) = a plastoquinol + NADP(+) + n H(+)(out). Its function is as follows. NDH shuttles electrons from NAD(P)H:plastoquinone, via FMN and iron-sulfur (Fe-S) centers, to quinones in the photosynthetic chain and possibly in a chloroplast respiratory chain. The immediate electron acceptor for the enzyme in this species is believed to be plastoquinone. Couples the redox reaction to proton translocation, and thus conserves the redox energy in a proton gradient. This is NAD(P)H-quinone oxidoreductase subunit 2 A, chloroplastic from Oryza nivara (Indian wild rice).